The following is a 174-amino-acid chain: Gamma-crystallin C (174 aa).

2 consecutive Beta/gamma crystallin 'Greek key' domains span residues 2 to 40 (GKIT…RVDS) and 41 to 83 (GCWM…CLIP). Cys-23 bears the S-methylcysteine mark. A connecting peptide region spans residues 84–87 (QTSS). Beta/gamma crystallin 'Greek key' domains follow at residues 88 to 128 (HRLR…HVLE) and 129 to 171 (GCWV…RRVV).

It belongs to the beta/gamma-crystallin family. Monomer.

Functionally, crystallins are the dominant structural components of the vertebrate eye lens. This chain is Gamma-crystallin C (CRYGC), found in Canis lupus familiaris (Dog).